The following is a 145-amino-acid chain: uncharacterized protein (145 aa).

The first 22 residues, 1–22 (MLTRLVLSAHLSSTTSPPWTHA), serve as a signal peptide directing secretion. Asparagine 98 carries N-linked (GlcNAc...) asparagine glycosylation. Positions 103-145 (SSGQQRQAARQEEENSICKAHDSREGRLGYPLSAHQPGSGGPN) are disordered.

It is found in the secreted. This is an uncharacterized protein from Homo sapiens (Human).